Reading from the N-terminus, the 286-residue chain is Putative chaperone BssE (286 aa).

ATP-binding positions include 47-54 (GKQGCGKS) and 108-115 (GCVIHLEE).

This sequence belongs to the CbbQ/NirQ/NorQ/GpvN family.

In terms of biological role, may have a role in assembly and/or activation of benzylsuccinate synthase. This is Putative chaperone BssE (bssE) from Thauera aromatica.